A 686-amino-acid polypeptide reads, in one-letter code: Calponin homology and LIM domain-containing protein (686 aa).

The Calponin-homology (CH) domain maps to 15-120 (ELALDESRDW…ITLYWLGRAA (106 aa)). LIM zinc-binding domains follow at residues 139–200 (MNCS…ATNL) and 219–279 (NKCS…SCGK). Over residues 305 to 314 (KQVMDKDGHD) the composition is skewed to basic and acidic residues. The tract at residues 305–345 (KQVMDKDGHDHHHHNHNKPTTTTTTTNSNSPLAKKKSDSCK) is disordered. A compositionally biased stretch (low complexity) spans 322 to 333 (KPTTTTTTTNSN). LIM zinc-binding domains are found at residues 373-435 (GTCG…NNKS), 437-495 (KNCH…LNQY), 519-579 (DRCV…IQQS), and 583-658 (DHCA…ASSS).

As to quaternary structure, interacts with limF and rab21.

In terms of biological role, involved in the regulation of phagocytosis. May repress rab21. The protein is Calponin homology and LIM domain-containing protein (ChLim) of Dictyostelium discoideum (Social amoeba).